The primary structure comprises 215 residues: Guanylate kinase (215 aa).

In terms of domain architecture, Guanylate kinase-like spans 11–189; the sequence is GNVFMVVAPS…ALTELVQIIS (179 aa). Residue 18–25 coordinates ATP; the sequence is APSGAGKS.

The protein belongs to the guanylate kinase family.

It localises to the cytoplasm. It carries out the reaction GMP + ATP = GDP + ADP. Functionally, essential for recycling GMP and indirectly, cGMP. The protein is Guanylate kinase of Bordetella bronchiseptica (strain ATCC BAA-588 / NCTC 13252 / RB50) (Alcaligenes bronchisepticus).